A 243-amino-acid polypeptide reads, in one-letter code: 7-cyano-7-deazaguanine synthase (243 aa).

18 to 28 (FSGGQDSATCL) serves as a coordination point for ATP. 4 residues coordinate Zn(2+): C206, C221, C224, and C227.

This sequence belongs to the QueC family. It depends on Zn(2+) as a cofactor.

The enzyme catalyses 7-carboxy-7-deazaguanine + NH4(+) + ATP = 7-cyano-7-deazaguanine + ADP + phosphate + H2O + H(+). It participates in purine metabolism; 7-cyano-7-deazaguanine biosynthesis. Functionally, catalyzes the ATP-dependent conversion of 7-carboxy-7-deazaguanine (CDG) to 7-cyano-7-deazaguanine (preQ(0)). The chain is 7-cyano-7-deazaguanine synthase from Methylorubrum extorquens (strain CM4 / NCIMB 13688) (Methylobacterium extorquens).